The primary structure comprises 292 residues: 4-hydroxy-tetrahydrodipicolinate synthase (292 aa).

Thr45 contacts pyruvate. Tyr133 (proton donor/acceptor) is an active-site residue. Lys161 functions as the Schiff-base intermediate with substrate in the catalytic mechanism. Ile203 contributes to the pyruvate binding site.

This sequence belongs to the DapA family. As to quaternary structure, homotetramer; dimer of dimers.

The protein localises to the cytoplasm. It catalyses the reaction L-aspartate 4-semialdehyde + pyruvate = (2S,4S)-4-hydroxy-2,3,4,5-tetrahydrodipicolinate + H2O + H(+). It participates in amino-acid biosynthesis; L-lysine biosynthesis via DAP pathway; (S)-tetrahydrodipicolinate from L-aspartate: step 3/4. Its function is as follows. Catalyzes the condensation of (S)-aspartate-beta-semialdehyde [(S)-ASA] and pyruvate to 4-hydroxy-tetrahydrodipicolinate (HTPA). The chain is 4-hydroxy-tetrahydrodipicolinate synthase from Shigella dysenteriae serotype 1 (strain Sd197).